The following is a 140-amino-acid chain: 3-hydroxyacyl-[acyl-carrier-protein] dehydratase FabZ (140 aa).

His47 is an active-site residue.

The protein belongs to the thioester dehydratase family. FabZ subfamily.

The protein resides in the cytoplasm. It catalyses the reaction a (3R)-hydroxyacyl-[ACP] = a (2E)-enoyl-[ACP] + H2O. Functionally, involved in unsaturated fatty acids biosynthesis. Catalyzes the dehydration of short chain beta-hydroxyacyl-ACPs and long chain saturated and unsaturated beta-hydroxyacyl-ACPs. In Streptococcus sanguinis (strain SK36), this protein is 3-hydroxyacyl-[acyl-carrier-protein] dehydratase FabZ.